Consider the following 460-residue polypeptide: Hydroxyproline dehydrogenase (460 aa).

K310 is subject to N6-acetyllysine.

The protein belongs to the proline oxidase family. The cofactor is FAD.

The enzyme catalyses trans-4-hydroxy-L-proline + a quinone = (3R,5S)-1-pyrroline-3-hydroxy-5-carboxylate + a quinol + H(+). It catalyses the reaction L-proline + a quinone = (S)-1-pyrroline-5-carboxylate + a quinol + H(+). Hydroproxyproline dehydrogenase activity is inhibited by THFA,(1R,3R)3-OH-cyclopentane-COOH and 5-OH-1H-pyrazole-3-COOH. Dehydrogenase that converts trans-4-L-hydroxyproline to delta-1-pyrroline-3-hydroxy-5-carboxylate (Hyp) using ubiquinone-10 as the terminal electron acceptor. Can also use proline as a substrate but with a very much lower efficiency. Does not react with other diastereomers of Hyp: trans-4-D-hydroxyproline and cis-4-L-hydroxyproline. Ubiquininone analogs such as menadione, duroquinone and ubiquinone-1 react more efficiently than oxygen as the terminal electron acceptor during catalysis. This Homo sapiens (Human) protein is Hydroxyproline dehydrogenase.